The chain runs to 1191 residues: Zinc finger protein ush (1191 aa).

Disordered stretches follow at residues 1–153 (MLSS…PKYP) and 169–194 (PDAK…DTQA). The span at 19–28 (VDSRDSKDLS) shows a compositional bias: basic and acidic residues. The segment covering 61 to 73 (IDDDADEDAEFEE) has biased composition (acidic residues). Phosphoserine is present on residues Ser116 and Ser118. The span at 130–151 (ATPPSEPEASPCPSPSPCPTPK) shows a compositional bias: pro residues. The CCHC FOG-type 1 zinc finger occupies 202–235 (LLKPARFMCLPCGIAFSSPSTLEAHQAYYCSHRI). Residues Cys210, Cys213, His226, and Cys231 each coordinate Zn(2+). A disordered region spans residues 239–274 (DEAGSDKSGAGGSGATAGDAAGLTGGSTEPPAKMAR). The segment covering 254–266 (TAGDAAGLTGGST) has biased composition (low complexity). Residues 279–301 (YGCTQCSYSADKKVSLNRHMRMH) form a C2H2-type 1 zinc finger. Residues 304 to 338 (SPAAPTLAGLPSLLQNGIAPPGVTPNPMEDSSSQQ) are disordered. A CCHC FOG-type 2 zinc finger spans residues 335–368 (SSQQTDRYCSHCDIRFNNIKTYRAHKQHYCSSRR). Zn(2+) is bound by residues Cys343, Cys346, His359, and Cys364. 3 disordered regions span residues 361–413 (QHYC…ARNK), 504–540 (EPER…ESAP), and 601–635 (APSL…MSPP). A compositionally biased stretch (gly residues) spans 383–394 (AGSGPGSAGGSI). Low complexity-rich tracts occupy residues 509–523 (SAPS…AKSS), 602–613 (PSLPSSPSMSPS), and 620–635 (SPRS…MSPP). 2 consecutive CCHC FOG-type zinc fingers follow at residues 720–753 (YVKK…SARS) and 791–824 (PVAY…PKGG). Positions 728, 731, 744, 749, 799, 802, 815, and 820 each coordinate Zn(2+). C2H2-type zinc fingers lie at residues 882 to 907 (NKCP…HGTV), 910 to 932 (YRCS…IRTH), and 983 to 1006 (FNCD…KLMH). The disordered stretch occupies residues 1011-1073 (INSPSISPDT…HENNNSPIAT (63 aa)). Ser1013, Ser1015, and Ser1017 each carry phosphoserine. A compositionally biased stretch (polar residues) spans 1025–1040 (VTSNPTTNQHSNSDVS). The segment at 1113–1146 (AAEVMKKYCSTCDISFNYVKTYLAHKQFYCKNKP) adopts a CCHC FOG-type 5 zinc-finger fold. Zn(2+) contacts are provided by Cys1121, Cys1124, His1137, and Cys1142. Ser1156 carries the phosphoserine modification.

The protein belongs to the FOG (Friend of GATA) family. Interacts with pnr, although weak this interaction is essential. Interacts with the isoform SrpNC of srp. Interacts with CtBP corepressor. First expressed in stage 5 at high levels in the primordium of the amnioserosa. Also expressed in germ band extending embryos in cells of the developing anterior and posterior midgut and in hemocyte precursors present in the cephalic mesoderm. In embryonic stage 8, it is expressed in blood cell precursors. By stage 10, it is expressed in hemocyte precursors that have spread throughout the lateral and ventral head mesoderm. By stage 11, it is expressed in the dorsal ectoderm and in precursor cells of the hemocytes and fat body. As embryogenesis proceeds, it is also expressed in stage 13 plasmatocytes migrating throughout the head mesoderm and down the ventral midline. By late embryogenesis, expression strongly decreases but remains in the dorsal ectoderm during dorsal closure, in cells within, or associated with, the central nervous system, and in plasmatocytes circulating throughout the embryonic hemolymph. During larval development, it is expressed in primary and secondary lobes of lymph glands. Expressed in the dorsal part of the thoracic imaginal disk.

Its subcellular location is the nucleus. In terms of biological role, transcription regulator that modulates expression mediated by transcription factors of the GATA family such as pnr and srp. Represses transcription of proneural achaete-scute complex (AS-C), which is usually activated by pnr. Involved in cardiogenesis, blood, and eye development. During hematopoiesis, it is required to restrict the number of crystal cells, probably via its interaction with the isoform SrpNC of srp. Negatively regulates expression of sr. Probably acts by interacting with the GATA-type zinc finger of proteins such as pnr and srp, possibly antagonizing the interaction between the GATA-type zinc finger and some cofactor. This Drosophila melanogaster (Fruit fly) protein is Zinc finger protein ush (ush).